The primary structure comprises 365 residues: Sulfate/thiosulfate import ATP-binding protein CysA (365 aa).

The ABC transporter domain occupies 3 to 237 (IEIANIKKSF…PATRFVLEFM (235 aa)). 35–42 (GPSGSGKT) is a binding site for ATP.

Belongs to the ABC transporter superfamily. Sulfate/tungstate importer (TC 3.A.1.6) family. The complex is composed of two ATP-binding proteins (CysA), two transmembrane proteins (CysT and CysW) and a solute-binding protein (CysP).

It is found in the cell inner membrane. The catalysed reaction is sulfate(out) + ATP + H2O = sulfate(in) + ADP + phosphate + H(+). It catalyses the reaction thiosulfate(out) + ATP + H2O = thiosulfate(in) + ADP + phosphate + H(+). Its function is as follows. Part of the ABC transporter complex CysAWTP involved in sulfate/thiosulfate import. Responsible for energy coupling to the transport system. The protein is Sulfate/thiosulfate import ATP-binding protein CysA of Escherichia coli O6:H1 (strain CFT073 / ATCC 700928 / UPEC).